The following is a 191-amino-acid chain: Shikimate kinase (191 aa).

ATP is bound at residue 24-29 (GSGKTS). T28 lines the Mg(2+) pocket. Substrate-binding residues include D46, R70, and G92. R130 is a binding site for ATP. Residue R149 participates in substrate binding.

This sequence belongs to the shikimate kinase family. As to quaternary structure, monomer. The cofactor is Mg(2+).

The protein resides in the cytoplasm. It carries out the reaction shikimate + ATP = 3-phosphoshikimate + ADP + H(+). It functions in the pathway metabolic intermediate biosynthesis; chorismate biosynthesis; chorismate from D-erythrose 4-phosphate and phosphoenolpyruvate: step 5/7. Functionally, catalyzes the specific phosphorylation of the 3-hydroxyl group of shikimic acid using ATP as a cosubstrate. The chain is Shikimate kinase from Parasynechococcus marenigrum (strain WH8102).